Reading from the N-terminus, the 392-residue chain is MSQIGGATCTWRYLGRFVTLGIYASVALFVWYTLVPTRSKHKDSIAINNNNADPATALIPVHTKNVVIYAATKFFGHPITTERFLATCPDVQNYCRITQEESEFDNADAVLFHNADYRGSTDKFKKMKSQRKPGVPYVLWSLESPTNDMFRPDSHMINWTMTYRTDSDVWAPYGTIVKLKNPVEVDLNAIWEGKTKTATWLASNCITQNHRFDLIKKIIDNGFEIDIWGNCGKQVSQCAGVDNQESPCVLELIKPYKFYISMENSNCKDYVTEKFWKALNDRMTIPIVLARKYYKDLGVPDSAYIAVDDYATLDEFLAHVKKVNKEKDLFLSYHQWRKEWKVIIGSGFSGWCTLCNKLQDKDYILKNPKSYKDVAWWHSFEMCNNQIASKYL.

At 1-12 (MSQIGGATCTWR) the chain is on the cytoplasmic side. A helical; Signal-anchor for type II membrane protein membrane pass occupies residues 13 to 35 (YLGRFVTLGIYASVALFVWYTLV). The Lumenal segment spans residues 36-392 (PTRSKHKDSI…CNNQIASKYL (357 aa)). A glycan (N-linked (GlcNAc...) asparagine) is linked at N158.

This sequence belongs to the glycosyltransferase 10 family. Unlike other alpha-(1,3)-fucosyltransferases, appears not to require a divalent metal cation as cofactor. is required as a cofactor.

It localises to the golgi apparatus. The protein localises to the golgi stack membrane. It participates in protein modification; protein glycosylation. With respect to regulation, inhibited by divalent metal cations. Involved in the fucosylation of N-glycans. Preferentially catalyzes the addition of fucose in alpha 1-3 linkage to the distal GlcNAc residue in N-glycans. Catalyzes the transfer of fucose to Gal-beta-1-4-GlcNAc-alpha-pNP (LN-pNP) and Gal-beta-1-4-GlcNAc-beta-1-3-Gal-beta-1-4-Glc (LNnT). Unlike alpha-(1,3)-fucosyltransferase fut-1, does not transfer fucose to Man-alpha-1-3-(Man-alpha-1-6)-Man-beta-1-4-GlcNAc-beta-1-4-GlcNAc-beta-1-Asn (M3), Man-alpha-1-3-(Man-alpha-1-6)-Man-beta-1-4-GlcNAc-beta-1-4-(Fuc-alpha-1-6)-GlcNAc-beta-1-Asn (M3F6) and GlcNAc-beta-1-2-Man-alpha-1-3-(GlcNAc-beta-1-2-Man-alpha-1-6)-Man-beta-1-4-GlcNAc-beta-1-4(Fuc-alpha-1-6)-GlcNAc-beta-1-Asn (GnM3F6). The chain is Alpha-(1,3)-fucosyltransferase fut-6 from Caenorhabditis elegans.